Reading from the N-terminus, the 163-residue chain is Cytochrome b6-f complex subunit 4 (163 aa).

Transmembrane regions (helical) follow at residues 36 to 56, 95 to 115, and 131 to 151; these read LLYIFPVVILGTIACNGGLAV, LLGVLLMVSVPAGLLTVPFLE, and TVFLVGTLVALWLGIGATLPI.

Belongs to the cytochrome b family. PetD subfamily. As to quaternary structure, the 4 large subunits of the cytochrome b6-f complex are cytochrome b6, subunit IV (17 kDa polypeptide, petD), cytochrome f and the Rieske protein, while the 4 small subunits are petG, petL, petM and petN. The complex functions as a dimer.

The protein localises to the plastid. The protein resides in the chloroplast thylakoid membrane. Component of the cytochrome b6-f complex, which mediates electron transfer between photosystem II (PSII) and photosystem I (PSI), cyclic electron flow around PSI, and state transitions. In Pelargonium hortorum (Common geranium), this protein is Cytochrome b6-f complex subunit 4.